A 272-amino-acid chain; its full sequence is Glutamate racemase (272 aa).

Substrate is bound by residues 9–10 (DS) and 41–42 (YG). Residue Cys-73 is the Proton donor/acceptor of the active site. Residue 74–75 (NT) coordinates substrate. Cys-183 serves as the catalytic Proton donor/acceptor. Residue 184 to 185 (TH) participates in substrate binding.

Belongs to the aspartate/glutamate racemases family.

The enzyme catalyses L-glutamate = D-glutamate. It functions in the pathway cell wall biogenesis; peptidoglycan biosynthesis. In terms of biological role, provides the (R)-glutamate required for cell wall biosynthesis. This is Glutamate racemase from Shewanella sp. (strain MR-4).